A 295-amino-acid polypeptide reads, in one-letter code: Tyrosine recombinase XerC (295 aa).

Residues Met-1–Val-85 enclose the Core-binding (CB) domain. One can recognise a Tyr recombinase domain in the interval Tyr-106–Asp-285. Residues Arg-145, Lys-169, His-237, Arg-240, and His-263 contribute to the active site. The active-site O-(3'-phospho-DNA)-tyrosine intermediate is the Tyr-272.

This sequence belongs to the 'phage' integrase family. XerC subfamily. As to quaternary structure, forms a cyclic heterotetrameric complex composed of two molecules of XerC and two molecules of XerD.

The protein localises to the cytoplasm. Its function is as follows. Site-specific tyrosine recombinase, which acts by catalyzing the cutting and rejoining of the recombining DNA molecules. The XerC-XerD complex is essential to convert dimers of the bacterial chromosome into monomers to permit their segregation at cell division. It also contributes to the segregational stability of plasmids. In Actinobacillus succinogenes (strain ATCC 55618 / DSM 22257 / CCUG 43843 / 130Z), this protein is Tyrosine recombinase XerC.